Reading from the N-terminus, the 55-residue chain is Histone H1 (55 aa).

Low complexity predominate over residues 1–15 (MAEVAPAPAAAAPAK). Residues 1-28 (MAEVAPAPAAAAPAKAPKKKAAAKPKKA) form a disordered region. Ala-2 carries the N-acetylalanine modification. Basic residues predominate over residues 16 to 27 (APKKKAAAKPKK). Residues 28 to 55 (AGPSVGELIVKAVSASKERSGVSLAALK) enclose the H15 domain.

It belongs to the histone H1/H5 family.

The protein localises to the nucleus. The protein resides in the chromosome. It is found in the secreted. Its function is as follows. Histones H1 are necessary for the condensation of nucleosome chains into higher-order structures. In terms of biological role, SAMP H1 has antibacterial activity against Gram-negative bacteria E.coli, A.salmonicida subsp salmonicida, V.anguillarum and S.typhimurium and Gram-positive bacteria B.subtilis and L.ivanovii. This chain is Histone H1, found in Salmo salar (Atlantic salmon).